The following is a 363-amino-acid chain: Fructose-bisphosphate aldolase C-B (363 aa).

Arginine 56 and lysine 147 together coordinate substrate. Catalysis depends on glutamate 188, which acts as the Proton acceptor. Lysine 230 functions as the Schiff-base intermediate with dihydroxyacetone-P in the catalytic mechanism.

The protein belongs to the class I fructose-bisphosphate aldolase family. Homotetramer.

The enzyme catalyses beta-D-fructose 1,6-bisphosphate = D-glyceraldehyde 3-phosphate + dihydroxyacetone phosphate. It functions in the pathway carbohydrate degradation; glycolysis; D-glyceraldehyde 3-phosphate and glycerone phosphate from D-glucose: step 4/4. This chain is Fructose-bisphosphate aldolase C-B (aldocb), found in Danio rerio (Zebrafish).